A 162-amino-acid polypeptide reads, in one-letter code: uncharacterized protein (162 aa).

The N-terminal stretch at M1 to G24 is a signal peptide. A lipid anchor (N-palmitoyl cysteine) is attached at C25. C25 carries the S-diacylglycerol cysteine lipid modification.

Its subcellular location is the cell membrane. This is an uncharacterized protein from Bacillus anthracis.